The primary structure comprises 421 residues: 3-phosphoshikimate 1-carboxyvinyltransferase (421 aa).

3 residues coordinate 3-phosphoshikimate: K19, S20, and R24. Phosphoenolpyruvate is bound at residue K19. Residues G88 and R116 each contribute to the phosphoenolpyruvate site. 3-phosphoshikimate contacts are provided by S160, Q162, D307, and K334. Q162 lines the phosphoenolpyruvate pocket. Catalysis depends on D307, which acts as the Proton acceptor. Residues R338 and R380 each coordinate phosphoenolpyruvate.

This sequence belongs to the EPSP synthase family. Monomer.

It localises to the cytoplasm. It catalyses the reaction 3-phosphoshikimate + phosphoenolpyruvate = 5-O-(1-carboxyvinyl)-3-phosphoshikimate + phosphate. It functions in the pathway metabolic intermediate biosynthesis; chorismate biosynthesis; chorismate from D-erythrose 4-phosphate and phosphoenolpyruvate: step 6/7. Catalyzes the transfer of the enolpyruvyl moiety of phosphoenolpyruvate (PEP) to the 5-hydroxyl of shikimate-3-phosphate (S3P) to produce enolpyruvyl shikimate-3-phosphate and inorganic phosphate. In Thermotoga neapolitana (strain ATCC 49049 / DSM 4359 / NBRC 107923 / NS-E), this protein is 3-phosphoshikimate 1-carboxyvinyltransferase.